Here is a 36-residue protein sequence, read N- to C-terminus: Glucagon-2 (36 aa).

It belongs to the glucagon family.

It localises to the secreted. Its function is as follows. Glucagon plays a key role in glucose metabolism and homeostasis. Regulates blood glucose by increasing gluconeogenesis and decreasing glycolysis. The chain is Glucagon-2 from Huso dauricus (Kaluga sturgeon).